Consider the following 337-residue polypeptide: Histidine N-acetyltransferase (337 aa).

The propeptide at methionine 1 to lysine 2 is removed in mature form. An N-acetyltransferase domain is found at leucine 21–alanine 156.

It catalyses the reaction L-histidine + acetyl-CoA = N(alpha)-acetyl-L-histidine + CoA + H(+). In terms of biological role, enzyme responsible for the N-acetyl-histidine (NAH) synthesis, which is a major constituent of brain and lens of ectothermic vertebrates. The sequence is that of Histidine N-acetyltransferase (hisat) from Scomber australasicus (Blue mackerel).